Here is a 340-residue protein sequence, read N- to C-terminus: Ketol-acid reductoisomerase (NADP(+)) (340 aa).

In terms of domain architecture, KARI N-terminal Rossmann spans 5-182 (MEYEKDVKVA…GSARVGLLET (178 aa)). NADP(+) is bound by residues 26-29 (YGSQ), Arg-49, Ser-53, and 83-86 (DEIQ). His-108 is an active-site residue. Gly-134 is a binding site for NADP(+). One can recognise a KARI C-terminal knotted domain in the interval 183–328 (TYKEETEEDL…AELRKAMPFV (146 aa)). Mg(2+)-binding residues include Asp-191, Glu-195, Glu-227, and Glu-231. Ser-252 serves as a coordination point for substrate.

This sequence belongs to the ketol-acid reductoisomerase family. The cofactor is Mg(2+).

The enzyme catalyses (2R)-2,3-dihydroxy-3-methylbutanoate + NADP(+) = (2S)-2-acetolactate + NADPH + H(+). It carries out the reaction (2R,3R)-2,3-dihydroxy-3-methylpentanoate + NADP(+) = (S)-2-ethyl-2-hydroxy-3-oxobutanoate + NADPH + H(+). The protein operates within amino-acid biosynthesis; L-isoleucine biosynthesis; L-isoleucine from 2-oxobutanoate: step 2/4. It functions in the pathway amino-acid biosynthesis; L-valine biosynthesis; L-valine from pyruvate: step 2/4. Involved in the biosynthesis of branched-chain amino acids (BCAA). Catalyzes an alkyl-migration followed by a ketol-acid reduction of (S)-2-acetolactate (S2AL) to yield (R)-2,3-dihydroxy-isovalerate. In the isomerase reaction, S2AL is rearranged via a Mg-dependent methyl migration to produce 3-hydroxy-3-methyl-2-ketobutyrate (HMKB). In the reductase reaction, this 2-ketoacid undergoes a metal-dependent reduction by NADPH to yield (R)-2,3-dihydroxy-isovalerate. This Streptococcus sanguinis (strain SK36) protein is Ketol-acid reductoisomerase (NADP(+)).